Here is a 433-residue protein sequence, read N- to C-terminus: Acetylcholine receptor-like protein cup-4 (433 aa).

The first 24 residues, 1–24, serve as a signal peptide directing secretion; the sequence is MKIIIFVCFILIFYLPIQKKHVNS. N-linked (GlcNAc...) asparagine glycosylation is found at Asn-41 and Asn-68. An intrachain disulfide couples Cys-178 to Cys-192. Asn-237 and Asn-249 each carry an N-linked (GlcNAc...) asparagine glycan. 4 helical membrane passes run 282–302, 307–327, 337–357, and 413–433; these read EAAV…TFFI, STFL…HDLV, IPFC…TLVL, and PIIG…CLLL.

It belongs to the ligand-gated ion channel (TC 1.A.9) family. Acetylcholine receptor (TC 1.A.9.1) subfamily. As to expression, expressed in coelomocytes.

The protein resides in the cytoplasmic vesicle membrane. Functionally, thought to regulate endocytosis in coelomocytes through modulation of phospholipase C activity. Possible acetylcholine receptor. The protein is Acetylcholine receptor-like protein cup-4 (cup-4) of Caenorhabditis elegans.